Here is a 431-residue protein sequence, read N- to C-terminus: uncharacterized protein (431 aa).

This is an uncharacterized protein from Acanthamoeba polyphaga (Amoeba).